We begin with the raw amino-acid sequence, 204 residues long: Leucyl/phenylalanyl-tRNA--protein transferase (204 aa).

Belongs to the L/F-transferase family.

It localises to the cytoplasm. The catalysed reaction is N-terminal L-lysyl-[protein] + L-leucyl-tRNA(Leu) = N-terminal L-leucyl-L-lysyl-[protein] + tRNA(Leu) + H(+). It carries out the reaction N-terminal L-arginyl-[protein] + L-leucyl-tRNA(Leu) = N-terminal L-leucyl-L-arginyl-[protein] + tRNA(Leu) + H(+). It catalyses the reaction L-phenylalanyl-tRNA(Phe) + an N-terminal L-alpha-aminoacyl-[protein] = an N-terminal L-phenylalanyl-L-alpha-aminoacyl-[protein] + tRNA(Phe). Functionally, functions in the N-end rule pathway of protein degradation where it conjugates Leu, Phe and, less efficiently, Met from aminoacyl-tRNAs to the N-termini of proteins containing an N-terminal arginine or lysine. In Brucella anthropi (strain ATCC 49188 / DSM 6882 / CCUG 24695 / JCM 21032 / LMG 3331 / NBRC 15819 / NCTC 12168 / Alc 37) (Ochrobactrum anthropi), this protein is Leucyl/phenylalanyl-tRNA--protein transferase.